Reading from the N-terminus, the 117-residue chain is MMDKRRTIAFKLNPDVNQTDKIVCDTLDSIPQGERSRLNRAALTAGLALYRQDPRTPFLLCELLTKETTFSDIVNILRSLFPKEMADFNSSIVTQSSSQQEQKSDEETKKNAMKLIN.

A disordered region spans residues 92 to 117 (IVTQSSSQQEQKSDEETKKNAMKLIN).

In terms of biological role, this protein is thought to be involved in the control of plasmid partition. This is Protein StbB (stbB) from Escherichia coli.